The chain runs to 323 residues: tRNA dimethylallyltransferase (323 aa).

18–25 lines the ATP pocket; it reads GPTASGKS. Residue 20 to 25 participates in substrate binding; that stretch reads TASGKS. Interaction with substrate tRNA regions lie at residues 43-46, 167-171, and 249-254; these read DSAQ, QRIQR, and RCVGYR.

The protein belongs to the IPP transferase family. In terms of assembly, monomer. The cofactor is Mg(2+).

It carries out the reaction adenosine(37) in tRNA + dimethylallyl diphosphate = N(6)-dimethylallyladenosine(37) in tRNA + diphosphate. Catalyzes the transfer of a dimethylallyl group onto the adenine at position 37 in tRNAs that read codons beginning with uridine, leading to the formation of N6-(dimethylallyl)adenosine (i(6)A). The sequence is that of tRNA dimethylallyltransferase from Nitrosospira multiformis (strain ATCC 25196 / NCIMB 11849 / C 71).